Here is a 327-residue protein sequence, read N- to C-terminus: GTP 3',8-cyclase (327 aa).

A Radical SAM core domain is found at 7 to 232 (HHDRQFRYLR…IKRDRTAGPA (226 aa)). Arg16 contributes to the GTP binding site. Residues Cys23 and Cys27 each coordinate [4Fe-4S] cluster. S-adenosyl-L-methionine is bound at residue Tyr29. Cys30 is a binding site for [4Fe-4S] cluster. Position 66 (Arg66) interacts with GTP. Gly70 contacts S-adenosyl-L-methionine. Residue Thr97 coordinates GTP. Ser121 lines the S-adenosyl-L-methionine pocket. A GTP-binding site is contributed by Lys158. Met192 contacts S-adenosyl-L-methionine. [4Fe-4S] cluster-binding residues include Cys255 and Cys258. GTP is bound at residue 260-262 (RLR). Residue Cys272 participates in [4Fe-4S] cluster binding.

This sequence belongs to the radical SAM superfamily. MoaA family. As to quaternary structure, monomer and homodimer. It depends on [4Fe-4S] cluster as a cofactor.

It carries out the reaction GTP + AH2 + S-adenosyl-L-methionine = (8S)-3',8-cyclo-7,8-dihydroguanosine 5'-triphosphate + 5'-deoxyadenosine + L-methionine + A + H(+). It functions in the pathway cofactor biosynthesis; molybdopterin biosynthesis. In terms of biological role, catalyzes the cyclization of GTP to (8S)-3',8-cyclo-7,8-dihydroguanosine 5'-triphosphate. The polypeptide is GTP 3',8-cyclase (Synechococcus elongatus (strain ATCC 33912 / PCC 7942 / FACHB-805) (Anacystis nidulans R2)).